Consider the following 97-residue polypeptide: Small ribosomal subunit protein bS20 (97 aa).

It belongs to the bacterial ribosomal protein bS20 family.

Functionally, binds directly to 16S ribosomal RNA. This is Small ribosomal subunit protein bS20 from Prochlorococcus marinus (strain MIT 9215).